A 343-amino-acid chain; its full sequence is Olfactory receptor 6K6 (343 aa).

The Extracellular portion of the chain corresponds to 1-53 (MKQYSVGNQHSNYRSLLFPFLCSQMTQLTASGNQTMVTEFLFSMFPHAHRGGL). A glycan (N-linked (GlcNAc...) asparagine) is linked at asparagine 33. The chain crosses the membrane as a helical span at residues 54–74 (LFFIPLLLIYGFILTGNLIMF). The Cytoplasmic portion of the chain corresponds to 75–82 (IVIQVGMA). A helical transmembrane segment spans residues 83–103 (LHTPLYFFISVLSFLEICYTT). Over 104–127 (TTIPKMLSCLISEQKSISVAGCLL) the chain is Extracellular. Cysteine 125 and cysteine 217 are oxidised to a cystine. A helical transmembrane segment spans residues 128 to 148 (QMYFFHSLGITESCVLTAMAI). At 149–167 (DRYIAICNPLRYPTIMIPK) the chain is on the cytoplasmic side. Residues 168-188 (LCIQLTVGSCFCGFLLVLPEI) form a helical membrane-spanning segment. The Extracellular portion of the chain corresponds to 189–224 (AWISTLPFCGSNQIHQIFCDFTPVLSLACTDTFLVV). A helical transmembrane segment spans residues 225 to 244 (IVDAIHAAEIVASFLVIALS). Topologically, residues 245-264 (YIRIIIVILGMHSAEGHHKA) are cytoplasmic. The helical transmembrane segment at 265-285 (FSTCAAHLAVFLLFFGSVAVM) threads the bilayer. Topologically, residues 286–298 (YLRFSATYSVFWD) are extracellular. A helical transmembrane segment spans residues 299-319 (TAIAVTFVILAPFFNPIIYSL). At 320 to 343 (KNKDMKEAIGRLFHYQKRAGWAGK) the chain is on the cytoplasmic side.

It belongs to the G-protein coupled receptor 1 family.

It localises to the cell membrane. Its function is as follows. Odorant receptor. The protein is Olfactory receptor 6K6 (OR6K6) of Homo sapiens (Human).